A 480-amino-acid chain; its full sequence is ATP synthase subunit beta (480 aa).

153-160 (GGAGVGKT) lines the ATP pocket.

Belongs to the ATPase alpha/beta chains family. In terms of assembly, F-type ATPases have 2 components, CF(1) - the catalytic core - and CF(0) - the membrane proton channel. CF(1) has five subunits: alpha(3), beta(3), gamma(1), delta(1), epsilon(1). CF(0) has three main subunits: a(1), b(2) and c(9-12). The alpha and beta chains form an alternating ring which encloses part of the gamma chain. CF(1) is attached to CF(0) by a central stalk formed by the gamma and epsilon chains, while a peripheral stalk is formed by the delta and b chains.

The protein localises to the cell membrane. The enzyme catalyses ATP + H2O + 4 H(+)(in) = ADP + phosphate + 5 H(+)(out). In terms of biological role, produces ATP from ADP in the presence of a proton gradient across the membrane. The catalytic sites are hosted primarily by the beta subunits. The sequence is that of ATP synthase subunit beta from Lactobacillus johnsonii (strain CNCM I-12250 / La1 / NCC 533).